Reading from the N-terminus, the 686-residue chain is Forkhead box protein P1 (686 aa).

Composition is skewed to polar residues over residues 1-19 (MMQE…IQNG) and 279-292 (IINP…QLSV). Disordered regions lie at residues 1-23 (MMQE…ASGG) and 279-306 (IINP…EEHS). The segment covering 295-306 (PKRESLSHEEHS) has biased composition (basic and acidic residues). A C2H2-type zinc finger spans residues 315 to 340 (GVCKWPGCEAVCEDFQSFLKHLNSEH). The interval 357–378 (VQQLELQLAKDKERLQAMMTHL) is leucine-zipper. Positions 391 to 395 (PLNLV) are CTBP1-binding. Over residues 403–412 (TASEASPQSL) the composition is skewed to polar residues. The tract at residues 403–440 (TASEASPQSLPHTPTTPTAPITPVTQGPSVITTTSMHN) is disordered. Residues 413 to 427 (PHTPTTPTAPITPVT) show a composition bias toward low complexity. Residues 428 to 439 (QGPSVITTTSMH) are compositionally biased toward polar residues. A DNA-binding region (fork-head) is located at residues 474 to 564 (RPPFTYASLI…PQKISGNPSL (91 aa)). The interval 619–686 (MEHTNSNGSD…EDEPVNEDIE (68 aa)) is disordered. Over residues 621–632 (HTNSNGSDSSPG) the composition is skewed to polar residues. Positions 676–686 (YEDEPVNEDIE) are enriched in acidic residues.

The protein localises to the nucleus. Its function is as follows. Transcriptional repressor. This is Forkhead box protein P1 (FOXP1) from Gallus gallus (Chicken).